Here is a 401-residue protein sequence, read N- to C-terminus: Probable acid ceramidase (401 aa).

The signal sequence occupies residues Met-1–Gln-22. Residues Asn-101, Asn-303, and Asn-371 are each glycosylated (N-linked (GlcNAc...) asparagine).

This sequence belongs to the acid ceramidase family.

It catalyses the reaction an N-acyl-sphingoid base + H2O = a sphingoid base + a fatty acid. The catalysed reaction is an N-acylsphing-4-enine + H2O = sphing-4-enine + a fatty acid. It carries out the reaction an N-acyl-15-methylhexadecasphing-4-enine + H2O = 15-methylhexadecasphing-4-enine + a fatty acid. In terms of biological role, catalyzes the hydrolysis of ceramides into sphingoid base and free fatty acid. C.elegans contain specific sphingoid bases, which are unique or different in structure compared to the sphingoid bases found in other animals. Two examples of these distinctive compounds are: 15-methylhexadecasphinganine and 15-methylhexadecasphing-4-enine. This Caenorhabditis elegans protein is Probable acid ceramidase.